The sequence spans 203 residues: MRGKFITFEGIDGAGKSTHIDWVADRLRARADIAGVVTTREPGGTSLGEDLRQILLHRKMHLETEALLMFAARREHIAEVIAPALERGKWVISDRFTDATFAYQGGGRGLATERLEVLENWVQGSLQPDLTLLFDVPLETASARLAAARTPDKFEAESRAFFQRTRDEYLRRAAQSPHRFRVIDATRSIADIRDELEKILATI.

10–17 (GIDGAGKS) contacts ATP.

It belongs to the thymidylate kinase family.

The enzyme catalyses dTMP + ATP = dTDP + ADP. Its function is as follows. Phosphorylation of dTMP to form dTDP in both de novo and salvage pathways of dTTP synthesis. This chain is Thymidylate kinase, found in Cupriavidus taiwanensis (strain DSM 17343 / BCRC 17206 / CCUG 44338 / CIP 107171 / LMG 19424 / R1) (Ralstonia taiwanensis (strain LMG 19424)).